Reading from the N-terminus, the 206-residue chain is Sperm acrosome developmental regulator (206 aa).

The disordered stretch occupies residues 180–206 (RRHHVRCHAAPRPNPAQSLKLDAQSPL).

As to expression, expressed in sperm (at protein level).

Its subcellular location is the cytoplasmic vesicle. It is found in the secretory vesicle. The protein resides in the acrosome. Functionally, may play a role in acrosome formation and nucleus shaping during spermiogenesis. This is Sperm acrosome developmental regulator from Homo sapiens (Human).